The following is a 556-amino-acid chain: Potassium-transporting ATPase potassium-binding subunit (556 aa).

The next 10 helical transmembrane spans lie at 5-25 (LAGI…HVPL), 65-85 (SVLA…LVQG), 133-153 (GLAV…IALV), 176-196 (IRIL…GGAI), 249-269 (PTTW…FSLP), 283-303 (YAIV…TLFF), 377-397 (AGLY…GLMV), 415-435 (LAAT…AVAM), 483-503 (ALGL…LALA), and 526-546 (FVGM…LPML).

This sequence belongs to the KdpA family. In terms of assembly, the system is composed of three essential subunits: KdpA, KdpB and KdpC.

The protein localises to the cell membrane. In terms of biological role, part of the high-affinity ATP-driven potassium transport (or Kdp) system, which catalyzes the hydrolysis of ATP coupled with the electrogenic transport of potassium into the cytoplasm. This subunit binds the extracellular potassium ions and delivers the ions to the membrane domain of KdpB through an intramembrane tunnel. This Mycolicibacterium vanbaalenii (strain DSM 7251 / JCM 13017 / BCRC 16820 / KCTC 9966 / NRRL B-24157 / PYR-1) (Mycobacterium vanbaalenii) protein is Potassium-transporting ATPase potassium-binding subunit.